The primary structure comprises 397 residues: Subtilisin-like serine protease Pen ch 13.0101 (397 aa).

A signal peptide spans 1-19; the sequence is MGFLKVLATSLATLAVVDA. Positions 20–115 are cleaved as a propeptide — removed in mature form; it reads GTLLTASNTD…IEPDMIVNAT (96 aa). In terms of domain architecture, Inhibitor I9 spans 35–113; it reads SYIVVMNDDV…KYIEPDMIVN (79 aa). Asn113 is a glycosylation site (N-linked (GlcNAc...) asparagine). Residues 125-397 form the Peptidase S8 domain; that stretch reads SWGLARISSK…SKLLYNGINV (273 aa). Active-site charge relay system residues include Asp157 and His188. Residues Asn249 and Asn284 are each glycosylated (N-linked (GlcNAc...) asparagine). Ser343 functions as the Charge relay system in the catalytic mechanism.

It belongs to the peptidase S8 family.

It is found in the secreted. Its function is as follows. Serine protease. This is Subtilisin-like serine protease Pen ch 13.0101 from Penicillium rubens.